The primary structure comprises 1442 residues: Death-associated protein kinase 1 (1442 aa).

The Protein kinase domain maps to 13 to 275 (YDTGEELGSG…IQDSLQHPWI (263 aa)). ATP is bound by residues 19–27 (LGSGQFAVV) and K42. D139 acts as the Proton acceptor in catalysis. The segment at 267–334 (QDSLQHPWIK…RSNMSVARSD (68 aa)) is calmodulin-binding. Phosphoserine; by RPS6KA1 and RPS6KA3 is present on S289. Residues 292–301 (NMEKFKKFAA) form an autoinhibitory domain region. S308 carries the phosphoserine; by autocatalysis modification. Residues S319 and S333 each carry the phosphoserine modification. ANK repeat units lie at residues 378–407 (HGTP…RIDV), 411–440 (GGSN…PLDV), 444–473 (SGET…NPDF), 477–506 (EEET…NVNI), 510–539 (EGET…DLNA), 543–572 (DGHI…FVDF), 576–605 (HGNT…NLDI), and 609–638 (YGRT…NVEA). In terms of domain architecture, Roc spans 681-955 (TQNLQPRIKL…NHLQEIRSQI (275 aa)). S734 carries the post-translational modification Phosphoserine; by MAPK1. Residues 875-904 (KLKNPLRVVLVATHADIMNIPRPAGGEFGY) form an ANK 9 repeat. S1115 is subject to Phosphoserine. One copy of the ANK 10 repeat lies at 1164-1196 (DADIRLWVSGCRIANRGAELLVLLVNHGQGIEV). The Death domain occupies 1312–1396 (KLSRLLDPPD…DAADFLLKAS (85 aa)). Residue S1433 is modified to Phosphoserine.

The protein belongs to the protein kinase superfamily. CAMK Ser/Thr protein kinase family. DAP kinase subfamily. Interacts with KLHL20. Interacts (via death domain) with MAPK1 and MAPK3. Interacts with MAP1B (via N-terminus). Interacts with PRKD1 in an oxidative stress-regulated manner. Interacts with PIN1, PDCD6, BECN1, TSC2 and STX1A. Interacts (via kinase domain) with DAPK3 (via kinase domain). Interacts with GRINB. Interacts (via death domain) with UNC5B (via death domain). Interacts with UNC5C (via death domain). Requires Mg(2+) as cofactor. Post-translationally, ubiquitinated by the BCR(KLHL20) E3 ubiquitin ligase complex, leading to its degradation by the proteasome. In terms of processing, in response to mitogenic stimulation (PMA or EGF), phosphorylated at Ser-289; phosphorylation suppresses DAPK1 pro-apoptotic function. Autophosphorylation at Ser-308 inhibits its catalytic activity. Phosphorylation at Ser-734 by MAPK1 increases its catalytic activity and promotes cytoplasmic retention of MAPK1. Endoplasmic-stress can cause dephosphorylation at Ser-308. High levels in bladder, uterus, vas deferens, lung, liver and kidney.

The catalysed reaction is L-seryl-[protein] + ATP = O-phospho-L-seryl-[protein] + ADP + H(+). The enzyme catalyses L-threonyl-[protein] + ATP = O-phospho-L-threonyl-[protein] + ADP + H(+). Activated by Ca(2+)/calmodulin. Regulated by a locking mechanism, involving autophosphorylation at Ser-308 and calmodulin binding. In the inactive state, Ser-308 is phosphorylated. Activation involves its dephosphorylation and a release-of-autoinhibition mechanism where binding of calmodulin induces a conformational change that relieves the steric block of the active site by the autoinhibitory domain. Activity is modulated by UNC5B and NTN1. UNC5B activates it by inhibiting the phosphorylation at Ser-308, whereas NTN1 inhibits UNC5B-mediated activation of DAPK1. Endoplasmic-stress activates by causing Ser-308 dephosphorylation. Its function is as follows. Calcium/calmodulin-dependent serine/threonine kinase involved in multiple cellular signaling pathways that trigger cell survival, apoptosis, and autophagy. Regulates both type I apoptotic and type II autophagic cell deaths signal, depending on the cellular setting. The former is caspase-dependent, while the latter is caspase-independent and is characterized by the accumulation of autophagic vesicles. Phosphorylates PIN1 resulting in inhibition of its catalytic activity, nuclear localization, and cellular function. Phosphorylates TPM1, enhancing stress fiber formation in endothelial cells. Phosphorylates STX1A and significantly decreases its binding to STXBP1. Phosphorylates PRKD1 and regulates JNK signaling by binding and activating PRKD1 under oxidative stress. Phosphorylates BECN1, reducing its interaction with BCL2 and BCL2L1 and promoting the induction of autophagy. Phosphorylates TSC2, disrupting the TSC1-TSC2 complex and stimulating mTORC1 activity in a growth factor-dependent pathway. Phosphorylates RPS6, MYL9 and DAPK3. Acts as a signaling amplifier of NMDA receptors at extrasynaptic sites for mediating brain damage in stroke. Cerebral ischemia recruits DAPK1 into the NMDA receptor complex and it phosphorylates GRINB at Ser-1303 inducing injurious Ca(2+) influx through NMDA receptor channels, resulting in an irreversible neuronal death. Required together with DAPK3 for phosphorylation of RPL13A upon interferon-gamma activation which is causing RPL13A involvement in transcript-selective translation inhibition. The protein is Death-associated protein kinase 1 (Dapk1) of Mus musculus (Mouse).